The following is a 57-amino-acid chain: Ribosome modulation factor (57 aa).

The segment at 1 to 28 (MKRQKRDRLERAQSQGYKAGLNGRSHDE) is disordered.

The protein belongs to the ribosome modulation factor family.

Its subcellular location is the cytoplasm. Its function is as follows. During stationary phase, converts 70S ribosomes to an inactive dimeric form (100S ribosomes). The chain is Ribosome modulation factor from Vibrio cholerae serotype O1 (strain MJ-1236).